The following is a 328-amino-acid chain: Tyrosine recombinase XerC (328 aa).

Residues 13-100 (QAPHPQIAAY…AWRGWFKWMA (88 aa)) form the Core-binding (CB) domain. Residues 122–319 (RLPKALSVEQ…DFQHLAKIYD (198 aa)) form the Tyr recombinase domain. Residues R162, K197, H271, R274, and H297 contribute to the active site. The active-site O-(3'-phospho-DNA)-tyrosine intermediate is Y306.

It belongs to the 'phage' integrase family. XerC subfamily. Forms a cyclic heterotetrameric complex composed of two molecules of XerC and two molecules of XerD.

The protein localises to the cytoplasm. Its function is as follows. Site-specific tyrosine recombinase, which acts by catalyzing the cutting and rejoining of the recombining DNA molecules. The XerC-XerD complex is essential to convert dimers of the bacterial chromosome into monomers to permit their segregation at cell division. It also contributes to the segregational stability of plasmids. In Ralstonia pickettii (strain 12J), this protein is Tyrosine recombinase XerC.